The primary structure comprises 366 residues: Tetraacyldisaccharide 4'-kinase (366 aa).

An ATP-binding site is contributed by Thr65–Thr72. Residues Ala343–Ala366 form a disordered region. Over residues Asn356–Ala366 the composition is skewed to basic and acidic residues.

The protein belongs to the LpxK family.

The catalysed reaction is a lipid A disaccharide + ATP = a lipid IVA + ADP + H(+). It functions in the pathway glycolipid biosynthesis; lipid IV(A) biosynthesis; lipid IV(A) from (3R)-3-hydroxytetradecanoyl-[acyl-carrier-protein] and UDP-N-acetyl-alpha-D-glucosamine: step 6/6. Functionally, transfers the gamma-phosphate of ATP to the 4'-position of a tetraacyldisaccharide 1-phosphate intermediate (termed DS-1-P) to form tetraacyldisaccharide 1,4'-bis-phosphate (lipid IVA). The polypeptide is Tetraacyldisaccharide 4'-kinase (Cupriavidus pinatubonensis (strain JMP 134 / LMG 1197) (Cupriavidus necator (strain JMP 134))).